The sequence spans 239 residues: Leucyl/phenylalanyl-tRNA--protein transferase (239 aa).

This sequence belongs to the L/F-transferase family.

The protein localises to the cytoplasm. It carries out the reaction N-terminal L-lysyl-[protein] + L-leucyl-tRNA(Leu) = N-terminal L-leucyl-L-lysyl-[protein] + tRNA(Leu) + H(+). It catalyses the reaction N-terminal L-arginyl-[protein] + L-leucyl-tRNA(Leu) = N-terminal L-leucyl-L-arginyl-[protein] + tRNA(Leu) + H(+). The enzyme catalyses L-phenylalanyl-tRNA(Phe) + an N-terminal L-alpha-aminoacyl-[protein] = an N-terminal L-phenylalanyl-L-alpha-aminoacyl-[protein] + tRNA(Phe). Its function is as follows. Functions in the N-end rule pathway of protein degradation where it conjugates Leu, Phe and, less efficiently, Met from aminoacyl-tRNAs to the N-termini of proteins containing an N-terminal arginine or lysine. The sequence is that of Leucyl/phenylalanyl-tRNA--protein transferase from Aliivibrio fischeri (strain MJ11) (Vibrio fischeri).